Consider the following 115-residue polypeptide: UPF0212 protein MJ0068 (115 aa).

It belongs to the UPF0212 family.

The chain is UPF0212 protein MJ0068 from Methanocaldococcus jannaschii (strain ATCC 43067 / DSM 2661 / JAL-1 / JCM 10045 / NBRC 100440) (Methanococcus jannaschii).